The chain runs to 394 residues: Ceramide glucosyltransferase-A (394 aa).

Topologically, residues 1–10 are lumenal; that stretch reads MAVLDLALQG. A helical membrane pass occupies residues 11-32; it reads LAIFGCVLFFVLWFMHFLSIVY. Residues 33-195 lie on the Cytoplasmic side of the membrane; that stretch reads TRLHLNKKIS…QVYFGTSHPR (163 aa). Asp-92 is a short sequence motif (D1). Asp-144 is a short sequence motif (D2). The chain crosses the membrane as a helical span at residues 196–215; the sequence is SYISANVTGFKCVTGMSCLM. The Lumenal segment spans residues 216 to 287; sequence RKEVLDQAGG…KLRINMLPAT (72 aa). Position 236 (Asp-236) is a short sequence motif, D3. Asp-236 functions as the Proton acceptor in the catalytic mechanism. The short motif at 272–276 is the (Q/R)XXRW element; that stretch reads RMIRW. The chain crosses the membrane as a helical span at residues 288–304; that stretch reads IICEPISECFVASLIIG. Residues 305-309 are Cytoplasmic-facing; that stretch reads WAAHH. A helical transmembrane segment spans residues 310 to 328; it reads IFRWDIMVFFMCHCLAWFI. Residues 329-348 lie on the Lumenal side of the membrane; sequence FDYIQLRGVQGGPLNFSKLD. Residues 349 to 369 traverse the membrane as a helical segment; it reads YAVAWFIRESMTIYIFLSALW. Over 370-394 the chain is Cytoplasmic; it reads DPTISWRTGRFRLRCGGTAEEILDV.

It belongs to the glycosyltransferase 2 family. At the late gastrula stage, weakly expressed ubiquitously. As neurulation proceeds (stages 15-16), expression moves towards the dorsal structures: involuted paraxial mesoderm and neural folds. In the tailbud embryo (stage 28), expression is restricted to the notochord. At later stages (stage 35), expression remains in the notochord and also appears weakly in the cephalic region.

Its subcellular location is the golgi apparatus membrane. It carries out the reaction an N-acylsphing-4-enine + UDP-alpha-D-glucose = a beta-D-glucosyl-(1&lt;-&gt;1')-N-acylsphing-4-enine + UDP + H(+). The enzyme catalyses UDP-alpha-D-xylose + an N-acylsphing-4-enine = a beta-D-xylosyl-(1&lt;-&gt;1')-N-acylsphing-4-enine + UDP + H(+). It catalyses the reaction N-(9Z-octadecenoyl)-sphing-4-enine + UDP-alpha-D-xylose = beta-D-xylosyl-(1&lt;-&gt;1')-N-(9Z-octadecenoyl)-sphing-4-enine + UDP + H(+). It participates in lipid metabolism; sphingolipid metabolism. Its function is as follows. Participates in the initial step of the glucosylceramide-based glycosphingolipid/GSL synthetic pathway at the cytosolic surface of the Golgi. Catalyzes the transfer of glucose from UDP-glucose to ceramide to produce glucosylceramide/GlcCer (such as beta-D-glucosyl-(1&lt;-&gt;1')-N-acylsphing-4-enine). Glucosylceramide is the core component of glycosphingolipids/GSLs, amphipathic molecules consisting of a ceramide lipid moiety embedded in the outer leaflet of the membrane, linked to one of hundreds of different externally oriented oligosaccharide structures. Glycosphingolipids are essential components of membrane microdomains that mediate membrane trafficking and signal transduction. They are implicated in many fundamental cellular processes, including growth, differentiation, migration, morphogenesis, cell-to-cell and cell-to-matrix interactions. Glycosphingolipids are required for convergence extension movements during early development. Catalyzes the synthesis of xylosylceramide/XylCer (such as beta-D-xylosyl-(1&lt;-&gt;1')-N-acylsphing-4-enine) using UDP-Xyl as xylose donor. In Xenopus laevis (African clawed frog), this protein is Ceramide glucosyltransferase-A (ugcg-a).